Here is a 149-residue protein sequence, read N- to C-terminus: Sec-independent protein translocase protein TatB (149 aa).

A helical membrane pass occupies residues 1–22 (MFDGIGFMELLLIGVLGLIVLG). Over residues 86-113 (LKQAAQSVNRPYQVQDTPSAQDNQIHNP) the composition is skewed to polar residues. The disordered stretch occupies residues 86 to 149 (LKQAAQSVNR…DPRSNTKANG (64 aa)). Residues 114–135 (ASQTVSTEASSTSASSAPKSES) are compositionally biased toward low complexity.

This sequence belongs to the TatB family. As to quaternary structure, the Tat system comprises two distinct complexes: a TatABC complex, containing multiple copies of TatA, TatB and TatC subunits, and a separate TatA complex, containing only TatA subunits. Substrates initially bind to the TatABC complex, which probably triggers association of the separate TatA complex to form the active translocon.

Its subcellular location is the cell inner membrane. Functionally, part of the twin-arginine translocation (Tat) system that transports large folded proteins containing a characteristic twin-arginine motif in their signal peptide across membranes. Together with TatC, TatB is part of a receptor directly interacting with Tat signal peptides. TatB may form an oligomeric binding site that transiently accommodates folded Tat precursor proteins before their translocation. The protein is Sec-independent protein translocase protein TatB of Shewanella oneidensis (strain ATCC 700550 / JCM 31522 / CIP 106686 / LMG 19005 / NCIMB 14063 / MR-1).